The sequence spans 61 residues: ATP synthase F(0) complex subunit 8 (61 aa).

The helical transmembrane segment at 10–32 (FMILSSTWLIYTIILQPKILSHL) threads the bilayer.

This sequence belongs to the ATPase protein 8 family. As to quaternary structure, component of the ATP synthase complex composed at least of ATP5F1A/subunit alpha, ATP5F1B/subunit beta, ATP5MC1/subunit c (homooctomer), MT-ATP6/subunit a, MT-ATP8/subunit 8, ATP5ME/subunit e, ATP5MF/subunit f, ATP5MG/subunit g, ATP5MK/subunit k, ATP5MJ/subunit j, ATP5F1C/subunit gamma, ATP5F1D/subunit delta, ATP5F1E/subunit epsilon, ATP5PF/subunit F6, ATP5PB/subunit b, ATP5PD/subunit d, ATP5PO/subunit OSCP. ATP synthase complex consists of a soluble F(1) head domain (subunits alpha(3) and beta(3)) - the catalytic core - and a membrane F(0) domain - the membrane proton channel (subunits c, a, 8, e, f, g, k and j). These two domains are linked by a central stalk (subunits gamma, delta, and epsilon) rotating inside the F1 region and a stationary peripheral stalk (subunits F6, b, d, and OSCP).

Its subcellular location is the mitochondrion membrane. Its function is as follows. Subunit 8, of the mitochondrial membrane ATP synthase complex (F(1)F(0) ATP synthase or Complex V) that produces ATP from ADP in the presence of a proton gradient across the membrane which is generated by electron transport complexes of the respiratory chain. ATP synthase complex consist of a soluble F(1) head domain - the catalytic core - and a membrane F(1) domain - the membrane proton channel. These two domains are linked by a central stalk rotating inside the F(1) region and a stationary peripheral stalk. During catalysis, ATP synthesis in the catalytic domain of F(1) is coupled via a rotary mechanism of the central stalk subunits to proton translocation. In vivo, can only synthesize ATP although its ATP hydrolase activity can be activated artificially in vitro. Part of the complex F(0) domain. The protein is ATP synthase F(0) complex subunit 8 of Chelonia mydas (Green sea-turtle).